The sequence spans 185 residues: MAAAARVSEVKAEGLLRGACAALAAAAALLVGLSTQTETVLLVRKKATVKDVQALWVLAMAAAAAAGYHLLQLLKCLYLGRVGGARPCRRSSRALAWTCLLLDKACAYTTFATTVAAAQACVVALDGAHAVQWTKLCNIYTRFCEQVAGSLVLGMLAAVGTAVLSAASARNVFRHYSSLETYAAH.

Residues 1-13 (MAAAARVSEVKAE) are Cytoplasmic-facing. Residues 14-34 (GLLRGACAALAAAAALLVGLS) form a helical membrane-spanning segment. The Extracellular portion of the chain corresponds to 35–53 (TQTETVLLVRKKATVKDVQ). The chain crosses the membrane as a helical span at residues 54–74 (ALWVLAMAAAAAAGYHLLQLL). The Cytoplasmic segment spans residues 75–104 (KCLYLGRVGGARPCRRSSRALAWTCLLLDK). Residues 105–125 (ACAYTTFATTVAAAQACVVAL) traverse the membrane as a helical segment. Over 126–146 (DGAHAVQWTKLCNIYTRFCEQ) the chain is Extracellular. A helical transmembrane segment spans residues 147 to 167 (VAGSLVLGMLAAVGTAVLSAA). The Cytoplasmic portion of the chain corresponds to 168–185 (SARNVFRHYSSLETYAAH).

Belongs to the Casparian strip membrane proteins (CASP) family. Homodimer and heterodimers.

The protein localises to the cell membrane. This is CASP-like protein 2C3 from Zea mays (Maize).